The following is a 644-amino-acid chain: Exoribonuclease 2 (644 aa).

The RNB domain maps to 189–516; that stretch reads RQDLTALNFV…NHRLLKAVIK (328 aa). An S1 motif domain is found at 561-643; that stretch reads NTRFAAEIID…ETRSIIARPA (83 aa).

Belongs to the RNR ribonuclease family. RNase II subfamily.

The protein localises to the cytoplasm. It carries out the reaction Exonucleolytic cleavage in the 3'- to 5'-direction to yield nucleoside 5'-phosphates.. In terms of biological role, involved in mRNA degradation. Hydrolyzes single-stranded polyribonucleotides processively in the 3' to 5' direction. The sequence is that of Exoribonuclease 2 from Salmonella enteritidis PT4 (strain P125109).